Consider the following 293-residue polypeptide: Indole-3-glycerol phosphate synthase (293 aa).

The protein belongs to the TrpC family.

It carries out the reaction 1-(2-carboxyphenylamino)-1-deoxy-D-ribulose 5-phosphate + H(+) = (1S,2R)-1-C-(indol-3-yl)glycerol 3-phosphate + CO2 + H2O. It functions in the pathway amino-acid biosynthesis; L-tryptophan biosynthesis; L-tryptophan from chorismate: step 4/5. The sequence is that of Indole-3-glycerol phosphate synthase from Rippkaea orientalis (strain PCC 8801 / RF-1) (Cyanothece sp. (strain PCC 8801)).